The sequence spans 269 residues: Phosphate import ATP-binding protein PstB (269 aa).

One can recognise an ABC transporter domain in the interval 22-264 (AEVRDLNFYY…PVQQKTADYV (243 aa)). 54 to 61 (GPSGCGKT) is a binding site for ATP.

Belongs to the ABC transporter superfamily. Phosphate importer (TC 3.A.1.7) family. In terms of assembly, the complex is composed of two ATP-binding proteins (PstB), two transmembrane proteins (PstC and PstA) and a solute-binding protein (PstS).

It is found in the cell inner membrane. The catalysed reaction is phosphate(out) + ATP + H2O = ADP + 2 phosphate(in) + H(+). In terms of biological role, part of the ABC transporter complex PstSACB involved in phosphate import. Responsible for energy coupling to the transport system. This chain is Phosphate import ATP-binding protein PstB, found in Thermosynechococcus vestitus (strain NIES-2133 / IAM M-273 / BP-1).